The following is a 78-amino-acid chain: ATP synthase subunit c (78 aa).

2 helical membrane-spanning segments follow: residues 9–29 (AFIGAGLAMIAILGVGIGQGW) and 56–76 (AAVTETGALYCFIIAILLVFV).

This sequence belongs to the ATPase C chain family. As to quaternary structure, F-type ATPases have 2 components, F(1) - the catalytic core - and F(0) - the membrane proton channel. F(1) has five subunits: alpha(3), beta(3), gamma(1), delta(1), epsilon(1). F(0) has three main subunits: a(1), b(2) and c(10-14). The alpha and beta chains form an alternating ring which encloses part of the gamma chain. F(1) is attached to F(0) by a central stalk formed by the gamma and epsilon chains, while a peripheral stalk is formed by the delta and b chains.

The protein localises to the cell membrane. In terms of biological role, f(1)F(0) ATP synthase produces ATP from ADP in the presence of a proton or sodium gradient. F-type ATPases consist of two structural domains, F(1) containing the extramembraneous catalytic core and F(0) containing the membrane proton channel, linked together by a central stalk and a peripheral stalk. During catalysis, ATP synthesis in the catalytic domain of F(1) is coupled via a rotary mechanism of the central stalk subunits to proton translocation. Key component of the F(0) channel; it plays a direct role in translocation across the membrane. A homomeric c-ring of between 10-14 subunits forms the central stalk rotor element with the F(1) delta and epsilon subunits. The protein is ATP synthase subunit c of Malacoplasma penetrans (strain HF-2) (Mycoplasma penetrans).